The following is a 469-amino-acid chain: UDP-N-acetylmuramate--L-alanine ligase (469 aa).

Residue G122–T128 participates in ATP binding.

Belongs to the MurCDEF family.

The protein localises to the cytoplasm. It carries out the reaction UDP-N-acetyl-alpha-D-muramate + L-alanine + ATP = UDP-N-acetyl-alpha-D-muramoyl-L-alanine + ADP + phosphate + H(+). It functions in the pathway cell wall biogenesis; peptidoglycan biosynthesis. In terms of biological role, cell wall formation. In Legionella pneumophila subsp. pneumophila (strain Philadelphia 1 / ATCC 33152 / DSM 7513), this protein is UDP-N-acetylmuramate--L-alanine ligase.